A 96-amino-acid polypeptide reads, in one-letter code: Plasminogen-like protein B (96 aa).

The N-terminal stretch at 1–19 is a signal peptide; that stretch reads MEHKEVVLLLLLFLKSGQG. Positions 20 to 96 constitute a PAN domain; it reads EPLDDYVNTQ…RMRDAVLFEK (77 aa). Intrachain disulfides connect Cys49–Cys73 and Cys53–Cys61.

The protein resides in the secreted. Functionally, may bind noncovalently to lysine binding sites present in the kringle structures of plasminogen. This may interfere with the binding of fibrin or alpha-2-antiplasmin to plasminogen and may result in the localization of activity at sites necessary for extracellular matrix destruction. This is Plasminogen-like protein B (PLGLB1) from Homo sapiens (Human).